The following is a 280-amino-acid chain: Probable N-acetyltransferase 14 (280 aa).

Transmembrane regions (helical) follow at residues 37 to 57 (LILH…LSSI) and 60 to 80 (CVLH…VIYL). Residues 111–152 (PDLPNPHLGRAKLTTNQEKTRRRKKAKEKEKMNESEQVDEDE) are disordered. Residues 116–273 (PHLGRAKLTT…EKGWLGYPLT (158 aa)) form the N-acetyltransferase domain.

It belongs to the camello family.

It localises to the membrane. Its function is as follows. Probable acetyltransferase. The sequence is that of Probable N-acetyltransferase 14 (nat14) from Danio rerio (Zebrafish).